A 435-amino-acid chain; its full sequence is 3-ketoacyl-CoA thiolase (435 aa).

Cys-98 acts as the Acyl-thioester intermediate in catalysis. Active-site proton acceptor residues include His-391 and Cys-421.

It belongs to the thiolase-like superfamily. Thiolase family. Heterotetramer of two alpha chains (FadJ) and two beta chains (FadI).

The protein resides in the cytoplasm. It catalyses the reaction an acyl-CoA + acetyl-CoA = a 3-oxoacyl-CoA + CoA. The protein operates within lipid metabolism; fatty acid beta-oxidation. In terms of biological role, catalyzes the final step of fatty acid oxidation in which acetyl-CoA is released and the CoA ester of a fatty acid two carbons shorter is formed. In Vibrio vulnificus (strain CMCP6), this protein is 3-ketoacyl-CoA thiolase.